The following is a 60-amino-acid chain: Potassium channel toxin alpha-KTx 29.1 (60 aa).

Residues 1–28 (MKSVCGVLIILVVLTTMLSISTFSTVGA) form the signal peptide. Cystine bridges form between C32–C51, C40–C56, and C44–C58.

The protein belongs to the short scorpion toxin superfamily. Potassium channel inhibitor family. Alpha-KTx 29 subfamily. In terms of tissue distribution, expressed by the venom gland.

Its subcellular location is the secreted. Its function is as follows. Weakly inhibits the Kv1.3/KCNA3 channel (1 uM of the toxin inhibits currents by 13.2%) and Kv7.1/KCNQ1 channel (10 uM of the toxin inhibits currents by 27.7%). This chain is Potassium channel toxin alpha-KTx 29.1, found in Lychas mucronatus (Chinese swimming scorpion).